Here is a 212-residue protein sequence, read N- to C-terminus: MTDLSDIRREYTKGGLRRADLPQNPMQLFELWMTQARDAELSDPTAMCVATVDEHGQPYQRIVLLKRFDDTGFVFFTNLGSRKAQQIATNNKVSLHFPWHPIERQVSILGEAQPLSTAEVLKYFMTRPKDSQIAAWVSQQSSKLSARQVLEGKFFEMKAKFAKGDVPLPSFWGGYLVKPSSIEFWQGGEHRLHDRFLYTRQADEWVIDRLAP.

Substrate-binding positions include Arg-8 to Tyr-11 and Lys-66. FMN contacts are provided by residues Arg-61 to Lys-66, Phe-76 to Thr-77, Arg-82, Lys-83, and Gln-105. Residues Tyr-123, Arg-127, and Ser-131 each coordinate substrate. FMN contacts are provided by residues Gln-140–Ser-141 and Trp-185. Residue Arg-191–His-193 participates in substrate binding. Arg-195 is a binding site for FMN.

It belongs to the pyridoxamine 5'-phosphate oxidase family. In terms of assembly, homodimer. The cofactor is FMN.

The enzyme catalyses pyridoxamine 5'-phosphate + O2 + H2O = pyridoxal 5'-phosphate + H2O2 + NH4(+). The catalysed reaction is pyridoxine 5'-phosphate + O2 = pyridoxal 5'-phosphate + H2O2. Its pathway is cofactor metabolism; pyridoxal 5'-phosphate salvage; pyridoxal 5'-phosphate from pyridoxamine 5'-phosphate: step 1/1. It functions in the pathway cofactor metabolism; pyridoxal 5'-phosphate salvage; pyridoxal 5'-phosphate from pyridoxine 5'-phosphate: step 1/1. Functionally, catalyzes the oxidation of either pyridoxine 5'-phosphate (PNP) or pyridoxamine 5'-phosphate (PMP) into pyridoxal 5'-phosphate (PLP). In Shewanella sp. (strain ANA-3), this protein is Pyridoxine/pyridoxamine 5'-phosphate oxidase.